Consider the following 386-residue polypeptide: Peroxisomal membrane protein PEX13 (386 aa).

A disordered region spans residues 1-76 (MSSTAVPRPK…SSGTYGESNT (76 aa)). The Lumenal segment spans residues 1-263 (MSSTAVPRPK…KATRRKISWK (263 aa)). The span at 23–39 (RNAQSLSAMMTSNQQDS) shows a compositional bias: polar residues. The segment covering 44 to 55 (ESNNSNSASESA) has biased composition (low complexity). Polar residues predominate over residues 65–76 (LNSSGTYGESNT). A helical membrane pass occupies residues 264–280 (PLLFFLMAVFGFPYLLN). The Cytoplasmic portion of the chain corresponds to 281 to 386 (KFITKLQTSG…EHVDDETRTH (106 aa)). The SH3 domain occupies 306–372 (SKLEFARALY…PYNYIEIIKR (67 aa)).

Belongs to the peroxin-13 family. In terms of assembly, interacts (via SH3 domain) with PEX14 (via SH3-binding motif); forming the PEX13-PEX14 docking complex.

Its subcellular location is the peroxisome membrane. Functionally, component of the PEX13-PEX14 docking complex, a translocon channel that specifically mediates the import of peroxisomal cargo proteins bound to PEX5 or PEX21 receptors. The PEX13-PEX14 docking complex forms a large import pore which can be opened to a diameter of about 9 nm. Mechanistically, PEX5 (or PEX21) receptor along with cargo proteins associates with the PEX14 subunit of the PEX13-PEX14 docking complex in the cytosol, leading to the insertion of the receptor into the organelle membrane with the concomitant translocation of the cargo into the peroxisome matrix. The sequence is that of Peroxisomal membrane protein PEX13 from Saccharomyces cerevisiae (strain ATCC 204508 / S288c) (Baker's yeast).